The sequence spans 434 residues: Methylenetetrahydrofolate--tRNA-(uracil-5-)-methyltransferase TrmFO (434 aa).

10–15 (GAGLAG) is a binding site for FAD.

The protein belongs to the MnmG family. TrmFO subfamily. Requires FAD as cofactor.

The protein localises to the cytoplasm. It catalyses the reaction uridine(54) in tRNA + (6R)-5,10-methylene-5,6,7,8-tetrahydrofolate + NADH + H(+) = 5-methyluridine(54) in tRNA + (6S)-5,6,7,8-tetrahydrofolate + NAD(+). The enzyme catalyses uridine(54) in tRNA + (6R)-5,10-methylene-5,6,7,8-tetrahydrofolate + NADPH + H(+) = 5-methyluridine(54) in tRNA + (6S)-5,6,7,8-tetrahydrofolate + NADP(+). Catalyzes the folate-dependent formation of 5-methyl-uridine at position 54 (M-5-U54) in all tRNAs. In Bacillus cereus (strain Q1), this protein is Methylenetetrahydrofolate--tRNA-(uracil-5-)-methyltransferase TrmFO.